Here is a 394-residue protein sequence, read N- to C-terminus: Elongation factor Tu (394 aa).

Residues Lys-10 to Val-204 enclose the tr-type G domain. Residues Gly-19–Thr-26 are G1. Gly-19–Thr-26 serves as a coordination point for GTP. Thr-26 lines the Mg(2+) pocket. Residues Gly-60–Ser-64 form a G2 region. The G3 stretch occupies residues Asp-81–Gly-84. Residues Asp-81–His-85 and Asn-136–Asp-139 each bind GTP. The G4 stretch occupies residues Asn-136–Asp-139. The segment at Ser-174–Leu-176 is G5.

The protein belongs to the TRAFAC class translation factor GTPase superfamily. Classic translation factor GTPase family. EF-Tu/EF-1A subfamily. As to quaternary structure, monomer.

The protein localises to the cytoplasm. It carries out the reaction GTP + H2O = GDP + phosphate + H(+). GTP hydrolase that promotes the GTP-dependent binding of aminoacyl-tRNA to the A-site of ribosomes during protein biosynthesis. The sequence is that of Elongation factor Tu from Rickettsia parkeri.